We begin with the raw amino-acid sequence, 102 residues long: MRGRLQGVELIARDWIGLMVEVVESPNHSEVGIKGEVVDETQNTLKIMTEKGLKVVAKRGRTFRVWYKGKIMRIKGDLINFRPEDRIKRGLMMLKRAKGVWI.

The protein belongs to the eukaryotic/archaeal RNase P protein component 1 family. Consists of a catalytic RNA component and at least 4-5 protein subunits.

It is found in the cytoplasm. It carries out the reaction Endonucleolytic cleavage of RNA, removing 5'-extranucleotides from tRNA precursor.. Part of ribonuclease P, a protein complex that generates mature tRNA molecules by cleaving their 5'-ends. The sequence is that of Ribonuclease P protein component 1 from Archaeoglobus fulgidus (strain ATCC 49558 / DSM 4304 / JCM 9628 / NBRC 100126 / VC-16).